A 107-amino-acid polypeptide reads, in one-letter code: Somatoliberin (107 aa).

An N-terminal signal peptide occupies residues 1–19 (MPLWVFFVILTLTNGSHCS). Positions 20-30 (PSPSLPFRIRR) are excised as a propeptide. L74 carries the post-translational modification Leucine amide. The propeptide occupies 77–107 (QVDSMWADHRQMSLESLLAALLQKHSRDSQG).

This sequence belongs to the glucagon family.

It localises to the secreted. In terms of biological role, GRF is released by the hypothalamus and acts on the adenohypophyse to stimulate the secretion of growth hormone. In Mesocricetus auratus (Golden hamster), this protein is Somatoliberin (GHRH).